We begin with the raw amino-acid sequence, 674 residues long: Electrogenic aspartate/glutamate antiporter SLC25A13, mitochondrial (674 aa).

Position 2 is an N-acetylalanine (Ala2). The interval Ala2–Pro295 is regulatory N-terminal domain. The Mitochondrial intermembrane segment spans residues Ala2–Arg331. EF-hand domains follow at residues Ser51–Cys86, Ala87–His122, Gln123–Glu157, and Ile158–His193. Residues Asp66, Thr68, Asp70, Leu72, and Glu77 each contribute to the Ca(2+) site. The interval Leu296 to Gln311 is linker loop domain. Positions Val321–Gly611 are carrier domain. 3 Solcar repeats span residues Ala326–Lys418, Val426–Ser510, and Val518–Trp605. A helical membrane pass occupies residues Phe332–Ile349. Over Asp350–Arg392 the chain is Mitochondrial matrix. Lys353 and Lys372 each carry N6-acetyllysine. Residues Gly393–Asn412 traverse the membrane as a helical segment. The Mitochondrial intermembrane segment spans residues Asp413–Gly435. Residues Gly436–Leu449 form a helical membrane-spanning segment. Residues Glu450 to Lys484 lie on the Mitochondrial matrix side of the membrane. Lys453 carries the N6-methyllysine modification. Lys484 carries the post-translational modification N6-acetyllysine; alternate. Lys484 is modified (N6-succinyllysine; alternate). A helical transmembrane segment spans residues Gly485–Tyr504. At Ala505–Leu523 the chain is on the mitochondrial intermembrane side. Residues Leu524–Ala541 traverse the membrane as a helical segment. The Mitochondrial matrix portion of the chain corresponds to Asp542–Lys580. An N6-succinyllysine modification is found at Lys580. The chain crosses the membrane as a helical span at residues Gly581–Tyr599. The Mitochondrial intermembrane portion of the chain corresponds to Glu600–Pro674. A C-terminal domain region spans residues Gly612–Pro674. Lys661 is modified (N6-acetyllysine).

This sequence belongs to the mitochondrial carrier (TC 2.A.29) family. Homodimer (via N-terminus).

The protein localises to the mitochondrion inner membrane. It carries out the reaction L-aspartate(in) + L-glutamate(out) + H(+)(out) = L-aspartate(out) + L-glutamate(in) + H(+)(in). The catalysed reaction is 3-sulfino-L-alanine(out) + L-glutamate(in) + H(+)(in) = 3-sulfino-L-alanine(in) + L-glutamate(out) + H(+)(out). It catalyses the reaction 3-sulfino-L-alanine(out) + L-aspartate(in) = 3-sulfino-L-alanine(in) + L-aspartate(out). Mitochondrial electrogenic aspartate/glutamate antiporter that favors efflux of aspartate and entry of glutamate and proton within the mitochondria as part of the malate-aspartate shuttle. Also mediates the uptake of L-cysteinesulfinate (3-sulfino-L-alanine) by mitochondria in exchange of L-glutamate and proton. Can also exchange L-cysteinesulfinate with aspartate in their anionic form without any proton translocation. Lacks transport activity towards gamma-aminobutyric acid (GABA). This chain is Electrogenic aspartate/glutamate antiporter SLC25A13, mitochondrial, found in Macaca fascicularis (Crab-eating macaque).